The sequence spans 609 residues: uncharacterized protein (609 aa).

It belongs to the NodU/CmcH family.

This is an uncharacterized protein from Methanocaldococcus jannaschii (strain ATCC 43067 / DSM 2661 / JAL-1 / JCM 10045 / NBRC 100440) (Methanococcus jannaschii).